Reading from the N-terminus, the 123-residue chain is Fluoride-specific ion channel FluC (123 aa).

A run of 4 helical transmembrane segments spans residues 1–21 (MQWLAIGLGAAFGACLRGWLA), 32–52 (LGTLGANVLGGLLIGLALVWF), 66–86 (FVITGFLGGLTTFSTFSAEVF), and 94–114 (LLAALGLVGLHVGMTLLATAL). The Na(+) site is built by glycine 73 and threonine 76.

This sequence belongs to the fluoride channel Fluc/FEX (TC 1.A.43) family.

It localises to the cell inner membrane. It carries out the reaction fluoride(in) = fluoride(out). Its activity is regulated as follows. Na(+) is not transported, but it plays an essential structural role and its presence is essential for fluoride channel function. In terms of biological role, fluoride-specific ion channel. Important for reducing fluoride concentration in the cell, thus reducing its toxicity. The protein is Fluoride-specific ion channel FluC of Psychrobacter arcticus (strain DSM 17307 / VKM B-2377 / 273-4).